A 643-amino-acid chain; its full sequence is Transmembrane protein 62 (643 aa).

Residues 9 to 29 (VVAGLAAAAVAALLLEHYGLA) traverse the membrane as a helical segment. N-linked (GlcNAc...) asparagine glycosylation occurs at N180. 4 helical membrane-spanning segments follow: residues 431–451 (IVARVLFVLIVLIQLTTLITF), 484–504 (YSVLLLTLYTVLGPWFVGEII), 532–552 (GIIQLVFFNIPLMAYVCWSLL), and 572–592 (IIPVYLLILLLYIWQVYSCYF).

The protein resides in the membrane. This Mus musculus (Mouse) protein is Transmembrane protein 62 (Tmem62).